Here is a 376-residue protein sequence, read N- to C-terminus: uncharacterized protein (376 aa).

Belongs to the mimivirus L17x/L18x family.

This is an uncharacterized protein from Acanthamoeba polyphaga (Amoeba).